We begin with the raw amino-acid sequence, 424 residues long: UPF0229 protein PputGB1_0427 (424 aa).

The disordered stretch occupies residues 81–107 (EFTAGEHIPRPQGGGGGGGGRGKAGNS). The span at 92–107 (QGGGGGGGGRGKAGNS) shows a compositional bias: gly residues.

It belongs to the UPF0229 family.

The chain is UPF0229 protein PputGB1_0427 from Pseudomonas putida (strain GB-1).